We begin with the raw amino-acid sequence, 104 residues long: DNA-directed RNA polymerase subunit omega (104 aa).

It belongs to the RNA polymerase subunit omega family. The RNAP catalytic core consists of 2 alpha, 1 beta, 1 beta' and 1 omega subunit. When a sigma factor is associated with the core the holoenzyme is formed, which can initiate transcription.

The catalysed reaction is RNA(n) + a ribonucleoside 5'-triphosphate = RNA(n+1) + diphosphate. Functionally, promotes RNA polymerase assembly. Latches the N- and C-terminal regions of the beta' subunit thereby facilitating its interaction with the beta and alpha subunits. This chain is DNA-directed RNA polymerase subunit omega, found in Streptococcus agalactiae serotype Ia (strain ATCC 27591 / A909 / CDC SS700).